We begin with the raw amino-acid sequence, 313 residues long: MADSVSMERLVTDLKLQVYSGEAHLKEKIVTLSDISRPGLELTGYFNYYPYERIQLFGMTEVSFTQNMTAEERLMIMRRMASENTPCFLISRSLEPPKEMLQAAEESGIPVLGSNLSTTRLSSLVTDYLDGQLAERRSMHGVLVDIYGLGVLITGDSGVGKSETALELVKRGHRLIADDRVDVYQQDERTVVGEAPMILRHLLEIRGIGIIDVMNLFGAGAVRADTSISLIVHLQNWSQDKKYDRLGSDTEEQMIFDVPVPKITVPVKVGRNLAIIIEVAAMNFRAKSMGYDATKTFEANLGKLIESNSDDEN.

Catalysis depends on residues His-140 and Lys-161. 155 to 162 (GDSGVGKS) contributes to the ATP binding site. A Mg(2+)-binding site is contributed by Ser-162. Residue Asp-179 is the Proton acceptor; for phosphorylation activity. Proton donor; for dephosphorylation activity of the active site. The important for the catalytic mechanism of both phosphorylation and dephosphorylation stretch occupies residues 203–212 (LEIRGIGIID). Glu-204 contributes to the Mg(2+) binding site. The active site involves Arg-245. Residues 266 to 271 (PVKVGR) form an important for the catalytic mechanism of dephosphorylation region.

This sequence belongs to the HPrK/P family. In terms of assembly, homohexamer. Mg(2+) is required as a cofactor.

It catalyses the reaction [HPr protein]-L-serine + ATP = [HPr protein]-O-phospho-L-serine + ADP + H(+). The catalysed reaction is [HPr protein]-O-phospho-L-serine + phosphate + H(+) = [HPr protein]-L-serine + diphosphate. Its function is as follows. Catalyzes the ATP- as well as the pyrophosphate-dependent phosphorylation of a specific serine residue in HPr, a phosphocarrier protein of the phosphoenolpyruvate-dependent sugar phosphotransferase system (PTS). HprK/P also catalyzes the pyrophosphate-producing, inorganic phosphate-dependent dephosphorylation (phosphorolysis) of seryl-phosphorylated HPr (P-Ser-HPr). The two antagonistic activities of HprK/P are regulated by several intracellular metabolites, which change their concentration in response to the absence or presence of rapidly metabolisable carbon sources (glucose, fructose, etc.) in the growth medium. Therefore, by controlling the phosphorylation state of HPr, HPrK/P is a sensor enzyme that plays a major role in the regulation of carbon metabolism and sugar transport: it mediates carbon catabolite repression (CCR), and regulates PTS-catalyzed carbohydrate uptake and inducer exclusion. The polypeptide is HPr kinase/phosphorylase (Latilactobacillus sakei subsp. sakei (strain 23K) (Lactobacillus sakei subsp. sakei)).